A 225-amino-acid polypeptide reads, in one-letter code: Probable septum site-determining protein MinC (225 aa).

This sequence belongs to the MinC family. As to quaternary structure, interacts with MinD and FtsZ.

Its function is as follows. Cell division inhibitor that blocks the formation of polar Z ring septums. Rapidly oscillates between the poles of the cell to destabilize FtsZ filaments that have formed before they mature into polar Z rings. Prevents FtsZ polymerization. The chain is Probable septum site-determining protein MinC from Listeria monocytogenes serotype 4b (strain CLIP80459).